The following is a 259-amino-acid chain: Phosphatidylserine decarboxylase proenzyme (259 aa).

The active-site Schiff-base intermediate with substrate; via pyruvic acid is the serine 183. Serine 183 carries the post-translational modification Pyruvic acid (Ser); by autocatalysis.

It belongs to the phosphatidylserine decarboxylase family. PSD-A subfamily. As to quaternary structure, heterodimer of a large membrane-associated beta subunit and a small pyruvoyl-containing alpha subunit. The cofactor is pyruvate. Is synthesized initially as an inactive proenzyme. Formation of the active enzyme involves a self-maturation process in which the active site pyruvoyl group is generated from an internal serine residue via an autocatalytic post-translational modification. Two non-identical subunits are generated from the proenzyme in this reaction, and the pyruvate is formed at the N-terminus of the alpha chain, which is derived from the carboxyl end of the proenzyme. The post-translation cleavage follows an unusual pathway, termed non-hydrolytic serinolysis, in which the side chain hydroxyl group of the serine supplies its oxygen atom to form the C-terminus of the beta chain, while the remainder of the serine residue undergoes an oxidative deamination to produce ammonia and the pyruvoyl prosthetic group on the alpha chain.

Its subcellular location is the cell membrane. The catalysed reaction is a 1,2-diacyl-sn-glycero-3-phospho-L-serine + H(+) = a 1,2-diacyl-sn-glycero-3-phosphoethanolamine + CO2. The protein operates within phospholipid metabolism; phosphatidylethanolamine biosynthesis; phosphatidylethanolamine from CDP-diacylglycerol: step 2/2. Catalyzes the formation of phosphatidylethanolamine (PtdEtn) from phosphatidylserine (PtdSer). The protein is Phosphatidylserine decarboxylase proenzyme of Neisseria gonorrhoeae (strain ATCC 700825 / FA 1090).